The following is a 154-amino-acid chain: Acidic phospholipase A2 1 (154 aa).

The signal sequence occupies residues 1–19 (MHPAHLLVLLGVCVSLLGA). Positions 20–27 (ARIPPLPL) are excised as a propeptide. 7 disulfide bridges follow: C38/C104, C54/C153, C56/C72, C71/C132, C78/C125, C88/C118, and C111/C123. Positions 55, 57, and 59 each coordinate Ca(2+). The active site involves H75. D76 provides a ligand contact to Ca(2+). Residue D126 is part of the active site.

Belongs to the phospholipase A2 family. Group I subfamily. D49 sub-subfamily. Monomer. Ca(2+) is required as a cofactor. Expressed by the venom gland.

It localises to the secreted. The catalysed reaction is a 1,2-diacyl-sn-glycero-3-phosphocholine + H2O = a 1-acyl-sn-glycero-3-phosphocholine + a fatty acid + H(+). Functionally, snake venom phospholipase A2 (PLA2) that shows moderate enzymatic activity and exhibits procoagulant activity. PLA2 catalyzes the calcium-dependent hydrolysis of the 2-acyl groups in 3-sn-phosphoglycerides. This Pseudonaja textilis (Eastern brown snake) protein is Acidic phospholipase A2 1.